A 141-amino-acid polypeptide reads, in one-letter code: Ubiquitin-like protein ATG12 (141 aa).

The segment at 24 to 54 (LELSPETAIPEPPSSVAVSPGTEEPPGDTKK) is disordered. Gly-141 participates in a covalent cross-link: Glycyl lysine isopeptide (Gly-Lys) (interchain with K-? in acceptor protein).

Belongs to the ATG12 family. In terms of assembly, forms a conjugate with ATG5. Part of the minor complex composed of 4 sets of ATG12-ATG5 and ATG16L1 (400 kDa); this complex interacts with ATG3 leading to disruption of ATG7 interaction and promotion of ATG8-like proteins lipidation. Forms an 800-kDa complex composed of ATG12-ATG5 and ATG16L2. Interacts with DHX58/RIG-1, IFIH1/MDA5 and MAVS/IPS-1 in monomeric form as well as in ATG12-ATG5 conjugate. The interaction with MAVS is further enhanced upon vesicular stomatitis virus (VSV) infection. Interacts with ATG3; this interaction is essential for phosphatidylethanolamine (PE)-conjugated ATG8-like proteins formation. Interacts with ATG7. Interacts with ATG10. The ATG12-ATG5 conjugate interacts with RAB33A; this interaction is bridged by ATG16L1 and promotes ATG12-ATG5-ATG16L1 complex recruitment to phagophores. Interacts with TECPR1. Interacts with SH3BGRL. The ATG12-ATG5 conjugate interacts with PDCD6IP (via the BRO1 domain); this interaction is bridged by ATG12 and promotes multiple PDCD6IP-mediated functions such as endolysosomal trafficking, macroautophagy and exosome biogenesis. Acetylated by EP300.

It is found in the cytoplasm. The protein localises to the preautophagosomal structure membrane. Its function is as follows. Ubiquitin-like protein involved in autophagy vesicles formation. Conjugation with ATG5 through a ubiquitin-like conjugating system involving also ATG7 as an E1-like activating enzyme and ATG10 as an E2-like conjugating enzyme, is essential for its function. The ATG12-ATG5 conjugate acts as an E3-like enzyme which is required for lipidation of ATG8 family proteins and their association to the vesicle membranes. The ATG12-ATG5 conjugate also negatively regulates the innate antiviral immune response by blocking the type I IFN production pathway through direct association with RARRES3 and MAVS. Also plays a role in translation or delivery of incoming viral RNA to the translation apparatus. As part of the ATG8 conjugation system with ATG5 and ATG16L1, required for recruitment of LRRK2 to stressed lysosomes and induction of LRRK2 kinase activity in response to lysosomal stress. The sequence is that of Ubiquitin-like protein ATG12 from Rattus norvegicus (Rat).